Reading from the N-terminus, the 420-residue chain is Protein-lysine N-trimethyltransferase SMYD5 (420 aa).

The 330-residue stretch at 29–358 (AEARFISSAK…AGEEICISYL (330 aa)) folds into the SET domain. The segment at 104–142 (PEQCSIRKDLHQQCPRCQVTYCSAECRQAALEQYHQVLC) adopts an MYND-type zinc-finger fold. Y357 lines the S-adenosyl-L-methionine pocket. Positions 392 to 420 (DDPDVTSDEEEEAEGETDDAELEDEMTDV) are disordered.

It belongs to the class V-like SAM-binding methyltransferase superfamily.

Its subcellular location is the cytoplasm. The enzyme catalyses L-lysyl-[protein] + 3 S-adenosyl-L-methionine = N(6),N(6),N(6)-trimethyl-L-lysyl-[protein] + 3 S-adenosyl-L-homocysteine + 3 H(+). It catalyses the reaction L-lysyl(20)-[histone H4] + 3 S-adenosyl-L-methionine = N(6),N(6),N(6)-trimethyl-L-lysyl(20)-[histone H4] + 3 S-adenosyl-L-homocysteine + 3 H(+). The catalysed reaction is L-lysyl(36)-[histone H3] + 3 S-adenosyl-L-methionine = N(6),N(6),N(6)-trimethyl-L-lysyl(36)-[histone H3] + 3 S-adenosyl-L-homocysteine + 3 H(+). In terms of biological role, protein-lysine N-trimethyltransferase that specifically catalyzes trimethylation of 'Lys-22' of the RPL40/eL40 subunit of the 60S ribosome, thereby promoting translation elongation and protein synthesis. May also act as a histone methyltransferase in the context of histone octamers, but not on nucleosome substrates: trimethylates 'Lys-36' of histone H3 and 'Lys-20' of histone H4 to form H3K36me3 and H4K20me3, respectively. The histone methyltransferase activity, which is independent of its SET domain, is however unsure in vivo. In Gallus gallus (Chicken), this protein is Protein-lysine N-trimethyltransferase SMYD5 (SMYD5).